The sequence spans 984 residues: Probable beta-galactosidase C (984 aa).

Residues 1-19 (MRLLNIFTTLCLLLWSGAA) form the signal peptide. Substrate is bound by residues tyrosine 78, asparagine 123, alanine 124, glutamate 125, and asparagine 183. Glutamate 184 serves as the catalytic Proton donor. Tyrosine 247 is a binding site for substrate. A disulfide bond links cysteine 253 and cysteine 300. Asparagine 272 carries N-linked (GlcNAc...) asparagine glycosylation. The Nucleophile role is filled by glutamate 283. Tyrosine 349 contributes to the substrate binding site. 11 N-linked (GlcNAc...) asparagine glycosylation sites follow: asparagine 387, asparagine 433, asparagine 462, asparagine 516, asparagine 583, asparagine 599, asparagine 673, asparagine 716, asparagine 756, asparagine 860, and asparagine 870.

It belongs to the glycosyl hydrolase 35 family.

It is found in the secreted. The enzyme catalyses Hydrolysis of terminal non-reducing beta-D-galactose residues in beta-D-galactosides.. Its function is as follows. Cleaves beta-linked terminal galactosyl residues from gangliosides, glycoproteins, and glycosaminoglycans. This chain is Probable beta-galactosidase C (lacC), found in Sclerotinia sclerotiorum (strain ATCC 18683 / 1980 / Ss-1) (White mold).